We begin with the raw amino-acid sequence, 112 residues long: Large ribosomal subunit protein bL17 (112 aa).

Belongs to the bacterial ribosomal protein bL17 family. Part of the 50S ribosomal subunit. Contacts protein L32.

The protein is Large ribosomal subunit protein bL17 of Heliobacterium modesticaldum (strain ATCC 51547 / Ice1).